A 143-amino-acid chain; its full sequence is Flagellar assembly factor FliW (143 aa).

It belongs to the FliW family. As to quaternary structure, interacts with flagellin in a 1:1 complex. Two molecules interact with each CsrA dimer; cannot interact with both flagellin and CsrA simultaneously. Has a higher affinity for CsrA than for flagellin. Interacts directly with flagellin (hag), forms a 3-way complex of Hag, FliS and FliW in which Flis and FliW do not directly interact. Interaction with Hag may occur via the C-terminus of Hag.

It is found in the cytoplasm. Its function is as follows. Acts as an anti-CsrA protein, binds CsrA and prevents it from repressing translation of its target genes, one of which is flagellin. Binds to flagellin (hag), which is implicated in polymerization, and participates in the assembly of the flagellum. An antagonist to translational regulator CsrA, it binds CsrA at an allosteric site and non-competitively inhibits CsrA binding to hag RNA. Partner switching by flagellin between FliW and CsrA provides a flagellar assembly checkpoint to tightly control the timing of flagellin synthesis. Flagellin binds to assembly factor FliW, freeing translation regulator CsrA to repress translation of the flagellin mRNA. When the flagellar hook is assembled flagellin is secreted, depleting intracellular flagellin, which frees FliW to interact with CsrA and inhibits CsrA binding to mRNA. This derepresses flagellin translation and provides protein for flagellar assembly. Once the flagellar filament is completed cytoplasmic flagellin levels rise and CsrA translation repression of flagellin reinitiates. Binds to CsrA and displaces it from hag mRNA. Binds to hag mRNA itself, but only at much higher concentrations than those required to displace CsrA. This is Flagellar assembly factor FliW from Bacillus subtilis (strain 168).